Consider the following 265-residue polypeptide: Arcelin-2 (265 aa).

An N-terminal signal peptide occupies residues 1 to 21 (MASSNLLTLALFLVLLTHANS). N-linked (GlcNAc...) asparagine glycosylation is found at asparagine 33 and asparagine 89. An intrachain disulfide couples cysteine 165 to cysteine 201.

The protein belongs to the leguminous lectin family.

Seed storage. This carbohydrate-binding lectin has toxic effects on bean bruchid pests. Antibiosis properties of legume lectins are proposed to be due to the lysis of epithelial cells of the intestine by binding to the carbohydrate moieties of these proteins. This Phaseolus vulgaris (Kidney bean) protein is Arcelin-2 (ARC2).